Reading from the N-terminus, the 107-residue chain is Regulatory protein SoxS (107 aa).

An HTH araC/xylS-type domain is found at 8–106; sequence QDLIAWIDEH…DRTPSDYRHR (99 aa). DNA-binding regions (H-T-H motif) lie at residues 25-46 and 73-96; these read DVVA…RTVT and IFDI…RRQF.

The protein localises to the cytoplasm. Transcriptional activator of the superoxide response regulon of E.coli that includes at least 10 genes such as sodA, nfo, zwf and micF. Binds the DNA sequence 5'-GCACN(7)CAA-3'. It also facilitates the subsequent binding of RNA polymerase to the micF and the nfo promoters. This Escherichia coli O157:H7 protein is Regulatory protein SoxS (soxS).